The primary structure comprises 346 residues: Zinc transporter YKE4 (346 aa).

The Extracellular portion of the chain corresponds to 1 to 2 (MK). Residues 3-23 (ASHICSYLLSIAPLVVSHGVH) traverse the membrane as a helical segment. Topologically, residues 24 to 69 (HNRDHGHEANHESKQSFLILKQESIFYSLVCFLQNHLFVLGPRYNA) are cytoplasmic. The chain crosses the membrane as a helical span at residues 70–90 (IVAILIIQLMPCLFVLFVPGL). The Extracellular segment spans residues 91–99 (RKNDRASLT). The helical transmembrane segment at 100-120 (LSLLVSFSLGTLLGDILLHVI) threads the bilayer. Topologically, residues 121-126 (PESLSG) are cytoplasmic. Residues 127-147 (VTDVTMVGGAIFLGFISFLTL) traverse the membrane as a helical segment. At 148–202 (DKTMRILSGTSNDDGSIHSHSHSHTPQQTAEKKAGFNMSAYLNVISGIAHHITDG) the chain is on the extracellular side. The N-linked (GlcNAc...) asparagine glycan is linked to N184. Residues 203 to 223 (IALATSFYSSTQVGIMTSIAV) form a helical membrane-spanning segment. Residues 224 to 252 (TFHEIPHELGDFAILLSSGFTFPQAIRAQ) are Cytoplasmic-facing. The helical transmembrane segment at 253-273 (AVTAFGAVVGTSIGCWMNEIG) threads the bilayer. N-linked (GlcNAc...) asparagine glycans are attached at residues N274 and N285. The Extracellular portion of the chain corresponds to 274 to 290 (NNSHKATSSSANASELM). A helical membrane pass occupies residues 291-311 (LPFTAGGLIYIATTSVVPQIL). Topologically, residues 312–322 (HSSAPDSKLRE) are cytoplasmic. The helical transmembrane segment at 323–343 (FKKWALQLVFIFVGFAVMALM) threads the bilayer. Over 344–346 (DEH) the chain is Extracellular.

It belongs to the ZIP transporter (TC 2.A.5) family. KE4/Catsup subfamily.

The protein localises to the endoplasmic reticulum membrane. Its function is as follows. Zinc transporter whose role depends on the zinc status of the cells. It helps to balance zinc levels between the cytosol and the secretory pathway. It transports zinc into the secretory pathway in a zinc-adequate environment and in a high zinc medium. In high zinc medium, transport of zinc into the secretory pathway is a way to eliminate zinc from the cytosol. Under low cytosolic zinc conditions, it removes zinc from the secretory pathway and acts as a zinc importer that helps to alleviate ER stress. The protein is Zinc transporter YKE4 (YKE4) of Saccharomyces cerevisiae (strain ATCC 204508 / S288c) (Baker's yeast).